Reading from the N-terminus, the 296-residue chain is SHSP domain-containing protein CPUR_05420 (296 aa).

The interval 50–83 is disordered; that stretch reads AWQTCPQQRHPHQPDVSGPPGSGFGEQPSQDTPN. A sHSP domain is found at 169–296; that stretch reads ETKKSFTPDI…GKGVKEITIV (128 aa).

It belongs to the small heat shock protein (HSP20) family.

Functionally, monooxygenase; part of the ergochrome gene cluster responsible for the typical purple-black color of the ergot sclerotia. The ergochrome gene cluster produces several ergot pigments including the yellow ergochrome secalonic acid and its derivatives, as well as the red anthraquinones endocrocin and clavorubin. The pathway begins with the synthesis of atrochrysone thioester by the polyketide synthase (PKS) CPUR_05437. The atrochrysone carboxyl ACP thioesterase CPUR_05436 then breaks the thioester bond and releases the atrochrysone carboxylic acid from CPUR_05437. The atrochrysone carboxylic acid is then converted to atrochrysone which is further transformed into emodin anthrone. The next step is performed by the anthrone oxygenase CPUR_05434 that catalyzes the oxidation of emodinanthrone to emodin. Emodin is further modified to yield monodictyphenone via several steps involving CPUR_05427, CPUR_05428, CPUR_05429 and CPUR_05430. The short chain dehydrogenase/reductase CPUR_05418 then catalyzes the C-5 ketoreduction to give the xanthone skeleton of the monomeric units. Ergochromes formation requires further dimerization steps of different xanthone units, probably catalyzed by the cytochrome P450 monooxygenase CPUR_05419. CPUR_05425, CPUR_05426 and CPUR_05431 are unique to Claviceps, thus it is likely that they are involved in further modification of xanthone units or in their dimerization. The yellow ergochromes and the red anthraquinone pigments endocrocin and clavorubin are products from the same PKS derived precursors and the latter are likely shunt products in the pathway of xanthone biosynthesis. It is proposed that atrochrysone carboxylic acid released from the PKS CPUR_05437 can also be converted to endocrocin anthrone which is further oxidized into endocrocin by CPUR_05435. Endocrocin could be then modified to clavorubin, possibly by CPUR_05423 and CPUR_05431. Clavorubin is the principal anthraquinone metabolite produced by the cluster with a much higher yield compared to endocrocin. The chain is SHSP domain-containing protein CPUR_05420 from Claviceps purpurea (strain 20.1) (Ergot fungus).